Reading from the N-terminus, the 233-residue chain is Large ribosomal subunit protein uL1 (233 aa).

The protein belongs to the universal ribosomal protein uL1 family. In terms of assembly, part of the 50S ribosomal subunit.

Its function is as follows. Binds directly to 23S rRNA. The L1 stalk is quite mobile in the ribosome, and is involved in E site tRNA release. Functionally, protein L1 is also a translational repressor protein, it controls the translation of the L11 operon by binding to its mRNA. The protein is Large ribosomal subunit protein uL1 of Rhizobium johnstonii (strain DSM 114642 / LMG 32736 / 3841) (Rhizobium leguminosarum bv. viciae).